The primary structure comprises 309 residues: MASPVTVLENPIPKSGQHLLFFLTSKQQLALEQRPIESSLGYSAYVDHGVSQGVIVNPSSIAAAMRSSLVTVYGITKPGTDKQYISVISPTYNLIANRQNQPIETTQKALAACSDNDRNNWVYYLNLPQGTPQYAIYELNIQDSSSAPTVYSGPTPSGNSNLAAVYFSPNKDRFIIFSNTDTRHYLYWVNSTLQSANRISGTGSVMSASPLAATTITNVQTRSMTIFLYYMDVNTLLNRIVGKVTDNEIHWYANQVVEGAPPMKVDTLLTGVVVEGKWNCLYYIPDGDTEFRAFNDTIRDSFFDEPREG.

N-linked (GlcNAc...) asparagine glycans are attached at residues Asn190 and Asn295.

It localises to the secreted. The protein localises to the cell wall. It is found in the membrane. Its function is as follows. May participate in wall plasticization and/or intussusception or in cell wall turnover. This is Wall-associated proteinase from Coccidioides immitis (strain RS) (Valley fever fungus).